The chain runs to 627 residues: Phosphomethylpyrimidine synthase (627 aa).

Substrate contacts are provided by residues Asn-233, Met-262, Tyr-291, His-327, 347–349 (SRG), 388–391 (DGLR), and Glu-427. His-431 serves as a coordination point for Zn(2+). Tyr-454 contributes to the substrate binding site. Residue His-495 coordinates Zn(2+). Residues Cys-575, Cys-578, and Cys-583 each coordinate [4Fe-4S] cluster.

Belongs to the ThiC family. As to quaternary structure, homodimer. Requires [4Fe-4S] cluster as cofactor.

It catalyses the reaction 5-amino-1-(5-phospho-beta-D-ribosyl)imidazole + S-adenosyl-L-methionine = 4-amino-2-methyl-5-(phosphooxymethyl)pyrimidine + CO + 5'-deoxyadenosine + formate + L-methionine + 3 H(+). It participates in cofactor biosynthesis; thiamine diphosphate biosynthesis. Its function is as follows. Catalyzes the synthesis of the hydroxymethylpyrimidine phosphate (HMP-P) moiety of thiamine from aminoimidazole ribotide (AIR) in a radical S-adenosyl-L-methionine (SAM)-dependent reaction. The protein is Phosphomethylpyrimidine synthase of Acidithiobacillus ferrooxidans (strain ATCC 23270 / DSM 14882 / CIP 104768 / NCIMB 8455) (Ferrobacillus ferrooxidans (strain ATCC 23270)).